Here is a 576-residue protein sequence, read N- to C-terminus: V-type ATP synthase alpha chain (576 aa).

Position 238–245 (238–245) interacts with ATP; it reads GPFGAGKT.

Belongs to the ATPase alpha/beta chains family.

The catalysed reaction is ATP + H2O + 4 H(+)(in) = ADP + phosphate + 5 H(+)(out). Functionally, produces ATP from ADP in the presence of a proton gradient across the membrane. The V-type alpha chain is a catalytic subunit. In Borrelia duttonii (strain Ly), this protein is V-type ATP synthase alpha chain.